The sequence spans 312 residues: MTKTMAEHISVMLNESVDMLVTDTNGLYVDGTFGRGGHTRLVLDRLDKGRLLGFDKDPVAIGHGKLLEQEDARFSIVQDSFANMAEHITNVFGVDRVDGVMMDLGVSSPQIDDAERGFSFMNDGPLDMRMNPDKGQSAAEWIATVSEKDMADVMYQYGEERFSRRIAKAICEYRSHTPILTTLQLSKIIAEANPAWEKGKNPATRAFQGIRIYINNELGDLEIGLEAAAQALKVGGRLAVISFHSLEDRIVKRFMKLQAKGPELPRHLPIRNAHLDIKFKTVGKAIKPSQSEVSENVRSRSAVLRVLERVSD.

S-adenosyl-L-methionine contacts are provided by residues 36–38, D55, F81, D103, and Q110; that span reads GGH.

This sequence belongs to the methyltransferase superfamily. RsmH family.

The protein localises to the cytoplasm. The catalysed reaction is cytidine(1402) in 16S rRNA + S-adenosyl-L-methionine = N(4)-methylcytidine(1402) in 16S rRNA + S-adenosyl-L-homocysteine + H(+). In terms of biological role, specifically methylates the N4 position of cytidine in position 1402 (C1402) of 16S rRNA. In Marinomonas sp. (strain MWYL1), this protein is Ribosomal RNA small subunit methyltransferase H.